The primary structure comprises 451 residues: Enolase (451 aa).

Q167 serves as a coordination point for (2R)-2-phosphoglycerate. Catalysis depends on E209, which acts as the Proton donor. The Mg(2+) site is built by D250, E307, and D334. (2R)-2-phosphoglycerate-binding residues include K359, R388, S389, and K410. K359 acts as the Proton acceptor in catalysis.

It belongs to the enolase family. Mg(2+) serves as cofactor.

It is found in the cytoplasm. It localises to the secreted. The protein localises to the cell surface. It carries out the reaction (2R)-2-phosphoglycerate = phosphoenolpyruvate + H2O. The protein operates within carbohydrate degradation; glycolysis; pyruvate from D-glyceraldehyde 3-phosphate: step 4/5. Its function is as follows. Catalyzes the reversible conversion of 2-phosphoglycerate (2-PG) into phosphoenolpyruvate (PEP). It is essential for the degradation of carbohydrates via glycolysis. The protein is Enolase of Mesomycoplasma hyopneumoniae (strain J / ATCC 25934 / NCTC 10110) (Mycoplasma hyopneumoniae).